The primary structure comprises 89 residues: Small ribosomal subunit protein bS20 (89 aa).

Over residues 1-12 the composition is skewed to basic residues; that stretch reads MANIKSAKKRAK. The segment at 1-22 is disordered; that stretch reads MANIKSAKKRAKQTIVRNERNT.

It belongs to the bacterial ribosomal protein bS20 family.

In terms of biological role, binds directly to 16S ribosomal RNA. This is Small ribosomal subunit protein bS20 from Xanthomonas oryzae pv. oryzae (strain KACC10331 / KXO85).